A 400-amino-acid polypeptide reads, in one-letter code: Nicotinate phosphoribosyltransferase (400 aa).

A Phosphohistidine; by autocatalysis modification is found at histidine 220.

The protein belongs to the NAPRTase family. Post-translationally, transiently phosphorylated on a His residue during the reaction cycle. Phosphorylation strongly increases the affinity for substrates and increases the rate of nicotinate D-ribonucleotide production. Dephosphorylation regenerates the low-affinity form of the enzyme, leading to product release.

It carries out the reaction nicotinate + 5-phospho-alpha-D-ribose 1-diphosphate + ATP + H2O = nicotinate beta-D-ribonucleotide + ADP + phosphate + diphosphate. The protein operates within cofactor biosynthesis; NAD(+) biosynthesis; nicotinate D-ribonucleotide from nicotinate: step 1/1. Functionally, catalyzes the synthesis of beta-nicotinate D-ribonucleotide from nicotinate and 5-phospho-D-ribose 1-phosphate at the expense of ATP. In Salmonella dublin (strain CT_02021853), this protein is Nicotinate phosphoribosyltransferase.